The primary structure comprises 259 residues: Aliphatic sulfonates import ATP-binding protein SsuB 2 (259 aa).

The 222-residue stretch at 17–238 folds into the ABC transporter domain; sequence LDILGLWKGF…VRSSQAFTSI (222 aa). Position 49–56 (49–56) interacts with ATP; that stretch reads GRSGCGKS.

The protein belongs to the ABC transporter superfamily. Aliphatic sulfonates importer (TC 3.A.1.17.2) family. As to quaternary structure, the complex is composed of two ATP-binding proteins (SsuB), two transmembrane proteins (SsuC) and a solute-binding protein (SsuA).

It localises to the cell inner membrane. The enzyme catalyses ATP + H2O + aliphatic sulfonate-[sulfonate-binding protein]Side 1 = ADP + phosphate + aliphatic sulfonateSide 2 + [sulfonate-binding protein]Side 1.. Functionally, part of the ABC transporter complex SsuABC involved in aliphatic sulfonates import. Responsible for energy coupling to the transport system. In Agrobacterium fabrum (strain C58 / ATCC 33970) (Agrobacterium tumefaciens (strain C58)), this protein is Aliphatic sulfonates import ATP-binding protein SsuB 2.